We begin with the raw amino-acid sequence, 446 residues long: D(1A) dopamine receptor (446 aa).

Residues 1 to 22 (MPLNDTTMDRRGLVVERDFSFR) are Extracellular-facing. An N-linked (GlcNAc...) asparagine glycan is attached at N4. A helical transmembrane segment spans residues 23–48 (ILTACFLSLLILSTLLGNTLVCAAVI). The Cytoplasmic portion of the chain corresponds to 49 to 59 (RFRHLRSKVTN). The helical transmembrane segment at 60 to 86 (FFVISLAVSDLLVAVLVMPWKAVAEIA) threads the bilayer. Residues 87–95 (GFWPFGSFC) lie on the Extracellular side of the membrane. Cysteines 95 and 185 form a disulfide. A helical membrane pass occupies residues 96–118 (NIWVAFDIMCSTASILNLCVISV). At 119–137 (DRYWAISSPFRYERKMTPK) the chain is on the cytoplasmic side. The chain crosses the membrane as a helical span at residues 138–162 (AAFILISVAWTLSVLISFIPVQLNW). Over 163-191 (HKARPLSSPDGNVSSQDETMDNCDSSLSR) the chain is Extracellular. A helical transmembrane segment spans residues 192–217 (TYAISSSLISFYIPVAIMIVTYTRIY). Residues 218–271 (RIAQKQIRRISALERAAVHAKNCQNTTGNGANVECSQPESSFKMSFKRETKVLK) lie on the Cytoplasmic side of the membrane. A helical transmembrane segment spans residues 272 to 298 (TLSVIMGVFVCCWLPFFILNCMVPFCE). The Extracellular portion of the chain corresponds to 299–315 (SDLPSGETKPFCIDSIT). A helical membrane pass occupies residues 316-340 (FDVFVWFGWANSSLNPIIYAFNADF). Over 341 to 446 (RKAFSTLLGC…PITQNGQHKT (106 aa)) the chain is Cytoplasmic. S-palmitoyl cysteine attachment occurs at residues C350 and C354.

This sequence belongs to the G-protein coupled receptor 1 family. In terms of assembly, interacts with DNAJC14 via its C-terminus.

The protein resides in the cell membrane. Its subcellular location is the endoplasmic reticulum membrane. It localises to the cell projection. The protein localises to the cilium membrane. It is found in the dendrite. The protein resides in the dendritic spine. In terms of biological role, this is one of the five types (D1 to D5) of receptors for dopamine. The activity of this receptor is mediated by G proteins which activate adenylyl cyclase. The protein is D(1A) dopamine receptor (DRD1) of Didelphis virginiana (North American opossum).